We begin with the raw amino-acid sequence, 68 residues long: uncharacterized protein (68 aa).

The interval 1-20 is disordered; sequence MYKQKKKNHPFQCKKKKKKK. Residues 27–44 form a helical membrane-spanning segment; it reads IKLLFNYFLFFNFIITTF.

The protein localises to the membrane. This is an uncharacterized protein from Dictyostelium discoideum (Social amoeba).